The chain runs to 109 residues: uncharacterized protein (109 aa).

This is an uncharacterized protein from Bacillus subtilis (strain 168).